The sequence spans 2359 residues: Neuron navigator 3 (2359 aa).

The 108-residue stretch at 77–184 folds into the Calponin-homology (CH) domain; that stretch reads IEDSKIYTDW…LFFSLSRYKQ (108 aa). Polar residues-rich tracts occupy residues 204–226, 233–243, 257–279, and 300–317; these read THTA…SSLT, SKHSGIATSQK, ASSS…FNSI, and QPSS…TSGQ. 2 disordered regions span residues 204–623 and 641–660; these read THTA…QQQH and ENEG…TKMD. The segment covering 318–329 has biased composition (low complexity); it reads PPASAIPSPSAS. Residues 335–352 show a composition bias toward polar residues; that stretch reads KSMNVKHSATSTMLTVKQ. Low complexity-rich tracts occupy residues 353-363 and 427-439; these read PSPATSPTPSS and NSGL…TNSS. Over residues 465–491 the composition is skewed to basic and acidic residues; that stretch reads PKEKEEKTRDKNKACAEKSGKEEKDQV. Low complexity predominate over residues 522-536; sequence IPSSSGIPKPGSKVP. Polar residues predominate over residues 592 to 623; sequence ASPSSSCVMQVTHSSGQSPGNGAVQLPQQQQH. The stretch at 680–708 forms a coiled coil; the sequence is EARRMRTVKNIADLRQNLEETMSSLRGTQ. Disordered stretches follow at residues 878-1315, 1413-1472, 1653-1758, and 1829-1855; these read ADSW…SPLF, LSES…AMSS, GALN…KPSQ, and ETGN…SRQS. 2 stretches are compositionally biased toward low complexity: residues 883–896 and 904–916; these read DSSS…DTLD and NTTS…SNIT. Positions 917-926 are enriched in polar residues; the sequence is VPSRKNTQLK. Positions 943 to 960 are enriched in basic and acidic residues; it reads EELKKAEGDCDSHGDGAA. Composition is skewed to polar residues over residues 978-989 and 997-1013; these read QKASLSVSQTGS and QGGT…TSAL. A compositionally biased stretch (basic and acidic residues) spans 1017–1029; that stretch reads GKTDDAKASEKGK. Composition is skewed to low complexity over residues 1077–1095 and 1160–1173; these read GAST…GSAT and SSTS…SSKS. The segment covering 1190–1199 has biased composition (polar residues); the sequence is GRSSPVTVNQ. Low complexity-rich tracts occupy residues 1209 to 1229, 1256 to 1266, and 1274 to 1285; these read VSDS…TSAS, GAKAGGKSASA, and SSSVVLSPSTSL. The span at 1299–1308 shows a compositional bias: gly residues; sequence GSMGSAGGLS. The span at 1439-1448 shows a compositional bias: basic and acidic residues; the sequence is NQEEGKEWLR. Polar residues predominate over residues 1449 to 1461; the sequence is SHSTGGLQDTGNQ. 2 positions are modified to phosphoserine: Ser-1462 and Ser-1466. Residues 1462 to 1472 show a composition bias toward low complexity; sequence SPLVSPSAMSS. Residues 1565–1656 adopt a coiled-coil conformation; sequence AEEKAHSEQI…AQAAIQGALN (92 aa). Low complexity-rich tracts occupy residues 1675 to 1692 and 1749 to 1758; these read SVSS…GSGN and SGSSSMKPSQ. Residues 1768–1835 adopt a coiled-coil conformation; the sequence is EAEAEIILQL…LKAETGNTAK (68 aa). The span at 1841 to 1855 shows a compositional bias: low complexity; sequence SDSSSTASSSSSRQS.

It belongs to the Nav/unc-53 family. Present in neurons from central and peripheral nervous systems (at protein level). Highly expressed in brain cortex, midbrain, cerebellum and hippocampus.

The protein resides in the nucleus outer membrane. Its function is as follows. Plays a role in cell migration. May be involved in neuron regeneration. May regulate IL2 production by T-cells. This is Neuron navigator 3 (Nav3) from Mus musculus (Mouse).